The sequence spans 347 residues: Isopentenyl-diphosphate delta-isomerase (347 aa).

9 to 10 (RK) provides a ligand contact to substrate. FMN is bound by residues Ser67, 68 to 70 (SMT), Ser98, and Asn127. 98-100 (SQR) contributes to the substrate binding site. A substrate-binding site is contributed by Gln162. Glu163 serves as a coordination point for Mg(2+). Residues Lys194, Thr224, 274–276 (GIR), and 295–296 (AA) contribute to the FMN site.

Belongs to the IPP isomerase type 2 family. As to quaternary structure, homooctamer. Dimer of tetramers. FMN is required as a cofactor. The cofactor is NADPH. Requires Mg(2+) as cofactor.

Its subcellular location is the cytoplasm. It carries out the reaction isopentenyl diphosphate = dimethylallyl diphosphate. Its function is as follows. Involved in the biosynthesis of isoprenoids. Catalyzes the 1,3-allylic rearrangement of the homoallylic substrate isopentenyl (IPP) to its allylic isomer, dimethylallyl diphosphate (DMAPP). The sequence is that of Isopentenyl-diphosphate delta-isomerase from Cronobacter sakazakii (strain ATCC BAA-894) (Enterobacter sakazakii).